A 201-amino-acid chain; its full sequence is Small ribosomal subunit protein uS4c (201 aa).

Residues 89–150 (MRLDNIVFRL…RQKSQAIITK (62 aa)) form the S4 RNA-binding domain.

The protein belongs to the universal ribosomal protein uS4 family. Part of the 30S ribosomal subunit. Contacts protein S5. The interaction surface between S4 and S5 is involved in control of translational fidelity.

It localises to the plastid. It is found in the chloroplast. Functionally, one of the primary rRNA binding proteins, it binds directly to 16S rRNA where it nucleates assembly of the body of the 30S subunit. In terms of biological role, with S5 and S12 plays an important role in translational accuracy. This is Small ribosomal subunit protein uS4c (rps4) from Funaria hygrometrica (Moss).